Here is a 334-residue protein sequence, read N- to C-terminus: Ferrochelatase (334 aa).

Residues H207 and E288 each contribute to the Fe cation site.

This sequence belongs to the ferrochelatase family.

It localises to the cytoplasm. It catalyses the reaction heme b + 2 H(+) = protoporphyrin IX + Fe(2+). It participates in porphyrin-containing compound metabolism; protoheme biosynthesis; protoheme from protoporphyrin-IX: step 1/1. Functionally, catalyzes the ferrous insertion into protoporphyrin IX. The sequence is that of Ferrochelatase from Helicobacter pylori (strain ATCC 700392 / 26695) (Campylobacter pylori).